Reading from the N-terminus, the 260-residue chain is Putative methylesterase 19 (260 aa).

The Acyl-ester intermediate role is filled by S81. Active-site charge relay system residues include D210 and H238.

Belongs to the AB hydrolase superfamily. Methylesterase family.

Putative methylesterase. The protein is Putative methylesterase 19 of Arabidopsis thaliana (Mouse-ear cress).